Consider the following 179-residue polypeptide: Lipoprotein signal peptidase (179 aa).

4 helical membrane passes run 10 to 30 (LFQFYPHNLIWLGLSILAIII), 48 to 68 (VPVLPFLNWTLLHNYGAAFSF), 75 to 95 (WQHYLFTGLAGIVSIIFIFWL), and 101 to 121 (NAMILPAAIALILGGALGNLI). Active-site residues include Asp-131 and Asp-149. A helical membrane pass occupies residues 141–161 (HFPAFNIADSAITIGTILLLI).

It belongs to the peptidase A8 family.

Its subcellular location is the cell inner membrane. The catalysed reaction is Release of signal peptides from bacterial membrane prolipoproteins. Hydrolyzes -Xaa-Yaa-Zaa-|-(S,diacylglyceryl)Cys-, in which Xaa is hydrophobic (preferably Leu), and Yaa (Ala or Ser) and Zaa (Gly or Ala) have small, neutral side chains.. The protein operates within protein modification; lipoprotein biosynthesis (signal peptide cleavage). Functionally, this protein specifically catalyzes the removal of signal peptides from prolipoproteins. This is Lipoprotein signal peptidase from Acinetobacter baylyi (strain ATCC 33305 / BD413 / ADP1).